The primary structure comprises 657 residues: DNA mismatch repair protein MutL (657 aa).

Belongs to the DNA mismatch repair MutL/HexB family.

This protein is involved in the repair of mismatches in DNA. It is required for dam-dependent methyl-directed DNA mismatch repair. May act as a 'molecular matchmaker', a protein that promotes the formation of a stable complex between two or more DNA-binding proteins in an ATP-dependent manner without itself being part of a final effector complex. The chain is DNA mismatch repair protein MutL from Streptococcus agalactiae serotype III (strain NEM316).